A 49-amino-acid chain; its full sequence is Large ribosomal subunit protein bL34 (49 aa).

The protein belongs to the bacterial ribosomal protein bL34 family.

This is Large ribosomal subunit protein bL34 from Sorangium cellulosum (strain So ce56) (Polyangium cellulosum (strain So ce56)).